The following is a 255-amino-acid chain: Taurine import ATP-binding protein TauB (255 aa).

An ABC transporter domain is found at 2–229 (LNVSGLWAEY…RYAEGEPCRA (228 aa)). Position 34-41 (34-41 (GPSGCGKT)) interacts with ATP.

The protein belongs to the ABC transporter superfamily. Taurine importer (TC 3.A.1.17.1) family. In terms of assembly, the complex is composed of two ATP-binding proteins (TauB), two transmembrane proteins (TauC) and a solute-binding protein (TauA).

The protein resides in the cell inner membrane. It carries out the reaction taurine(out) + ATP + H2O = taurine(in) + ADP + phosphate + H(+). Part of the ABC transporter complex TauABC involved in taurine import. Responsible for energy coupling to the transport system. In Yersinia pestis bv. Antiqua (strain Antiqua), this protein is Taurine import ATP-binding protein TauB.